Here is a 110-residue protein sequence, read N- to C-terminus: Urease subunit beta (110 aa).

It belongs to the urease beta subunit family. In terms of assembly, heterotrimer of UreA (gamma), UreB (beta) and UreC (alpha) subunits. Three heterotrimers associate to form the active enzyme.

It localises to the cytoplasm. The enzyme catalyses urea + 2 H2O + H(+) = hydrogencarbonate + 2 NH4(+). It participates in nitrogen metabolism; urea degradation; CO(2) and NH(3) from urea (urease route): step 1/1. This Pseudoalteromonas translucida (strain TAC 125) protein is Urease subunit beta.